Consider the following 102-residue polypeptide: Small ribosomal subunit protein uS10 (102 aa).

The segment at 33-59 is disordered; it reads RMSGPIPLPTKRIRITTRKSPDGEGSA.

It belongs to the universal ribosomal protein uS10 family. As to quaternary structure, part of the 30S ribosomal subunit.

Functionally, involved in the binding of tRNA to the ribosomes. This chain is Small ribosomal subunit protein uS10, found in Pyrococcus furiosus (strain ATCC 43587 / DSM 3638 / JCM 8422 / Vc1).